The sequence spans 175 residues: dATP triphosphohydrolase (175 aa).

Arg-19 contacts dATP. Residues His-34, His-66, Asp-67, Glu-70, Asp-75, and Asp-119 each coordinate Co(2+).

Belongs to the Caudovirales dATP triphosphohydrolase family. Homohexamer. It depends on Co(2+) as a cofactor. The cofactor is Zn(2+).

It catalyses the reaction dATP + H2O = 2'-deoxyadenosine + triphosphate + H(+). It carries out the reaction dADP + H2O = 2'-deoxyadenosine + diphosphate. The catalysed reaction is dAMP + H2O = 2'-deoxyadenosine + phosphate. Functionally, catalyzes the hydrolysis of dATP, dADP and dAMP into dA. This step is essential for Z-genome synthesis (containing aminoadenine instead of adenine). Specifically removes dATP and its precursor dADP from the nucleotide pool of the host, preventing the incorporation of A into the phage genome and favoring the integration of the Z-base into the viral genome. This chain is dATP triphosphohydrolase (datZ), found in Cyanophage S-2L (Cyanobacteria phage S-2L).